The primary structure comprises 180 residues: Hypoxanthine-guanine phosphoribosyltransferase (180 aa).

Diphosphate-binding residues include lysine 43 and glycine 44. Glutamate 99 and aspartate 100 together coordinate Mg(2+). Residue aspartate 103 is the Proton acceptor of the active site. GMP is bound by residues lysine 131, 152–153 (FV), and aspartate 159. Arginine 165 is a diphosphate binding site.

Belongs to the purine/pyrimidine phosphoribosyltransferase family. The cofactor is Mg(2+).

The protein resides in the cytoplasm. The enzyme catalyses IMP + diphosphate = hypoxanthine + 5-phospho-alpha-D-ribose 1-diphosphate. The catalysed reaction is GMP + diphosphate = guanine + 5-phospho-alpha-D-ribose 1-diphosphate. It participates in purine metabolism; IMP biosynthesis via salvage pathway; IMP from hypoxanthine: step 1/1. Its pathway is purine metabolism; GMP biosynthesis via salvage pathway; GMP from guanine: step 1/1. In terms of biological role, purine salvage pathway enzyme that catalyzes the transfer of the ribosyl-5-phosphate group from 5-phospho-alpha-D-ribose 1-diphosphate (PRPP) to the N9 position of the 6-oxopurines hypoxanthine and guanine to form the corresponding ribonucleotides IMP (inosine 5'-monophosphate) and GMP (guanosine 5'-monophosphate), with the release of PPi. In Bacillus subtilis (strain 168), this protein is Hypoxanthine-guanine phosphoribosyltransferase (hprT).